The sequence spans 942 residues: Isoleucine--tRNA ligase (942 aa).

Positions 58–68 match the 'HIGH' region motif; that stretch reads PYANGDIHIGH. Glu-566 contributes to the L-isoleucyl-5'-AMP binding site. Positions 607-611 match the 'KMSKS' region motif; that stretch reads KMSKS. Lys-610 is a binding site for ATP. Positions 905, 908, 925, and 928 each coordinate Zn(2+).

The protein belongs to the class-I aminoacyl-tRNA synthetase family. IleS type 1 subfamily. As to quaternary structure, monomer. It depends on Zn(2+) as a cofactor.

The protein resides in the cytoplasm. It carries out the reaction tRNA(Ile) + L-isoleucine + ATP = L-isoleucyl-tRNA(Ile) + AMP + diphosphate. Catalyzes the attachment of isoleucine to tRNA(Ile). As IleRS can inadvertently accommodate and process structurally similar amino acids such as valine, to avoid such errors it has two additional distinct tRNA(Ile)-dependent editing activities. One activity is designated as 'pretransfer' editing and involves the hydrolysis of activated Val-AMP. The other activity is designated 'posttransfer' editing and involves deacylation of mischarged Val-tRNA(Ile). The chain is Isoleucine--tRNA ligase from Vibrio campbellii (strain ATCC BAA-1116).